The following is a 704-amino-acid chain: Phosphoribosylformylglycinamidine synthase subunit PurL (704 aa).

The active site involves His-32. Tyr-35 is an ATP binding site. Glu-76 is a binding site for Mg(2+). Substrate is bound by residues 77–80 (SHNH) and Arg-99. The active-site Proton acceptor is His-78. A Mg(2+)-binding site is contributed by Asp-100. Substrate is bound at residue Gln-224. Asp-252 contacts Mg(2+). 296 to 298 (ESQ) contacts substrate. ATP contacts are provided by Asp-471 and Gly-508. Asn-509 lines the Mg(2+) pocket. Ser-511 provides a ligand contact to substrate.

This sequence belongs to the FGAMS family. Monomer. Part of the FGAM synthase complex composed of 1 PurL, 1 PurQ and 2 PurS subunits.

It localises to the cytoplasm. It carries out the reaction N(2)-formyl-N(1)-(5-phospho-beta-D-ribosyl)glycinamide + L-glutamine + ATP + H2O = 2-formamido-N(1)-(5-O-phospho-beta-D-ribosyl)acetamidine + L-glutamate + ADP + phosphate + H(+). Its pathway is purine metabolism; IMP biosynthesis via de novo pathway; 5-amino-1-(5-phospho-D-ribosyl)imidazole from N(2)-formyl-N(1)-(5-phospho-D-ribosyl)glycinamide: step 1/2. In terms of biological role, part of the phosphoribosylformylglycinamidine synthase complex involved in the purines biosynthetic pathway. Catalyzes the ATP-dependent conversion of formylglycinamide ribonucleotide (FGAR) and glutamine to yield formylglycinamidine ribonucleotide (FGAM) and glutamate. The FGAM synthase complex is composed of three subunits. PurQ produces an ammonia molecule by converting glutamine to glutamate. PurL transfers the ammonia molecule to FGAR to form FGAM in an ATP-dependent manner. PurS interacts with PurQ and PurL and is thought to assist in the transfer of the ammonia molecule from PurQ to PurL. This is Phosphoribosylformylglycinamidine synthase subunit PurL from Pyrococcus furiosus (strain ATCC 43587 / DSM 3638 / JCM 8422 / Vc1).